A 76-amino-acid chain; its full sequence is Translational regulator CsrA (76 aa).

Belongs to the CsrA/RsmA family. In terms of assembly, homodimer; the beta-strands of each monomer intercalate to form a hydrophobic core, while the alpha-helices form wings that extend away from the core.

The protein localises to the cytoplasm. A translational regulator that binds mRNA to regulate translation initiation and/or mRNA stability. Usually binds in the 5'-UTR at or near the Shine-Dalgarno sequence preventing ribosome-binding, thus repressing translation. Its main target seems to be the major flagellin gene, while its function is anatagonized by FliW. This chain is Translational regulator CsrA, found in Syntrophomonas wolfei subsp. wolfei (strain DSM 2245B / Goettingen).